The chain runs to 804 residues: Probable replication endonuclease from prophage-like region 1 (804 aa).

Catalysis depends on O-(5'-phospho-DNA)-tyrosine intermediate residues Y498 and Y502.

The protein belongs to the phage GPA family.

Functionally, possible endonuclease which induces a single-strand cut and initiates DNA replication. The protein is Probable replication endonuclease from prophage-like region 1 of Salmonella typhi.